The chain runs to 330 residues: Phosphate acyltransferase (330 aa).

The protein belongs to the PlsX family. Homodimer. Probably interacts with PlsY.

The protein resides in the cytoplasm. It catalyses the reaction a fatty acyl-[ACP] + phosphate = an acyl phosphate + holo-[ACP]. Its pathway is lipid metabolism; phospholipid metabolism. In terms of biological role, catalyzes the reversible formation of acyl-phosphate (acyl-PO(4)) from acyl-[acyl-carrier-protein] (acyl-ACP). This enzyme utilizes acyl-ACP as fatty acyl donor, but not acyl-CoA. The sequence is that of Phosphate acyltransferase from Teredinibacter turnerae (strain ATCC 39867 / T7901).